A 427-amino-acid chain; its full sequence is Serine protease HTRA2, mitochondrial (427 aa).

Residues 33–55 (HTASSSKGSGGDNSKDKENNGQN) are disordered. The chain crosses the membrane as a helical span at residues 66-86 (SAFQFCVPFSLGALVSAVLIE). An IAP-binding motif is present at residues 78–81 (ALVS). The segment at 144 to 307 (SNGSGFVIEQ…IPIDYVKVFL (164 aa)) is serine protease. Active-site charge relay system residues include His-162, Asp-194, and Ser-271. Residues 330–415 (MGITMLTLTP…DLEIVILRGV (86 aa)) enclose the PDZ domain.

This sequence belongs to the peptidase S1C family. Interacts with th/DIAP1 (via BIR 2 domain).

The protein resides in the mitochondrion intermembrane space. The protein localises to the mitochondrion membrane. It carries out the reaction Cleavage of non-polar aliphatic amino-acids at the P1 position, with a preference for Val, Ile and Met. At the P2 and P3 positions, Arg is selected most strongly with a secondary preference for other hydrophilic residues.. Functionally, serine protease that shows proteolytic activity against a non-specific substrate beta-casein. Promotes or induces cell death either by direct binding to and inhibition of BIRC proteins (also called inhibitor of apoptosis proteins, IAPs), leading to an increase in caspase activity, or by a BIRC inhibition-independent, caspase-independent and serine protease activity-dependent mechanism. Can antagonize antiapoptotic activity of th/Diap1 by directly inducing the degradation of th/Diap1. In Drosophila pseudoobscura pseudoobscura (Fruit fly), this protein is Serine protease HTRA2, mitochondrial.